A 433-amino-acid polypeptide reads, in one-letter code: Chaperone SurA (433 aa).

The signal sequence occupies residues 1–24 (MDGIKLLLSIIILYFYTYINCAIA). PpiC domains are found at residues 173-274 (NTTF…KVHD) and 285-385 (ITEV…QLQN).

Its subcellular location is the periplasm. It catalyses the reaction [protein]-peptidylproline (omega=180) = [protein]-peptidylproline (omega=0). Chaperone involved in the correct folding and assembly of outer membrane proteins. Recognizes specific patterns of aromatic residues and the orientation of their side chains, which are found more frequently in integral outer membrane proteins. May act in both early periplasmic and late outer membrane-associated steps of protein maturation. The sequence is that of Chaperone SurA from Baumannia cicadellinicola subsp. Homalodisca coagulata.